Here is a 416-residue protein sequence, read N- to C-terminus: Serine hydroxymethyltransferase (416 aa).

Residues L120 and 124–126 contribute to the (6S)-5,6,7,8-tetrahydrofolate site; that span reads GHL. K230 carries the post-translational modification N6-(pyridoxal phosphate)lysine. E246 provides a ligand contact to (6S)-5,6,7,8-tetrahydrofolate.

It belongs to the SHMT family. As to quaternary structure, homodimer. Requires pyridoxal 5'-phosphate as cofactor.

The protein localises to the cytoplasm. The catalysed reaction is (6R)-5,10-methylene-5,6,7,8-tetrahydrofolate + glycine + H2O = (6S)-5,6,7,8-tetrahydrofolate + L-serine. It functions in the pathway one-carbon metabolism; tetrahydrofolate interconversion. Its pathway is amino-acid biosynthesis; glycine biosynthesis; glycine from L-serine: step 1/1. Functionally, catalyzes the reversible interconversion of serine and glycine with tetrahydrofolate (THF) serving as the one-carbon carrier. This reaction serves as the major source of one-carbon groups required for the biosynthesis of purines, thymidylate, methionine, and other important biomolecules. Also exhibits THF-independent aldolase activity toward beta-hydroxyamino acids, producing glycine and aldehydes, via a retro-aldol mechanism. This Onion yellows phytoplasma (strain OY-M) protein is Serine hydroxymethyltransferase.